A 452-amino-acid polypeptide reads, in one-letter code: Phosphoglucosamine mutase (452 aa).

Serine 108 (phosphoserine intermediate) is an active-site residue. Positions 108, 247, 249, and 251 each coordinate Mg(2+). The residue at position 108 (serine 108) is a Phosphoserine.

It belongs to the phosphohexose mutase family. Mg(2+) is required as a cofactor. Post-translationally, activated by phosphorylation.

The catalysed reaction is alpha-D-glucosamine 1-phosphate = D-glucosamine 6-phosphate. Functionally, catalyzes the conversion of glucosamine-6-phosphate to glucosamine-1-phosphate. The sequence is that of Phosphoglucosamine mutase from Paraburkholderia phytofirmans (strain DSM 17436 / LMG 22146 / PsJN) (Burkholderia phytofirmans).